Here is a 534-residue protein sequence, read N- to C-terminus: Chaperonin GroEL 3 (534 aa).

ATP-binding positions include T31–P34, G416, N479–L481, and D495.

The protein belongs to the chaperonin (HSP60) family. In terms of assembly, forms a cylinder of 14 subunits composed of two heptameric rings stacked back-to-back. Interacts with the co-chaperonin GroES.

The protein localises to the cytoplasm. It carries out the reaction ATP + H2O + a folded polypeptide = ADP + phosphate + an unfolded polypeptide.. Together with its co-chaperonin GroES, plays an essential role in assisting protein folding. The GroEL-GroES system forms a nano-cage that allows encapsulation of the non-native substrate proteins and provides a physical environment optimized to promote and accelerate protein folding. This chain is Chaperonin GroEL 3, found in Protochlamydia amoebophila (strain UWE25).